The following is a 181-amino-acid chain: c-Myc-binding protein homolog (181 aa).

A compositionally biased stretch (low complexity) spans 111–127; the sequence is ESTEAAEQQQQQQQQEN. Disordered regions lie at residues 111-145 and 159-181; these read ESTE…VAEI and VVTT…GSSE. Polar residues predominate over residues 168 to 181; the sequence is PSPTVQAEASGSSE.

The protein belongs to the AMY1 family.

It localises to the nucleus. This Drosophila melanogaster (Fruit fly) protein is c-Myc-binding protein homolog.